We begin with the raw amino-acid sequence, 238 residues long: Sugar fermentation stimulation protein homolog (238 aa).

This sequence belongs to the SfsA family.

This is Sugar fermentation stimulation protein homolog from Haemophilus influenzae (strain ATCC 51907 / DSM 11121 / KW20 / Rd).